The primary structure comprises 149 residues: 3-dehydroquinate dehydratase (149 aa).

Catalysis depends on Tyr23, which acts as the Proton acceptor. The substrate site is built by Asn75, His81, and Asp88. His101 serves as the catalytic Proton donor. Substrate-binding positions include 102–103 (LS) and Arg112.

This sequence belongs to the type-II 3-dehydroquinase family. In terms of assembly, homododecamer.

The catalysed reaction is 3-dehydroquinate = 3-dehydroshikimate + H2O. Its pathway is metabolic intermediate biosynthesis; chorismate biosynthesis; chorismate from D-erythrose 4-phosphate and phosphoenolpyruvate: step 3/7. Its function is as follows. Catalyzes a trans-dehydration via an enolate intermediate. This is 3-dehydroquinate dehydratase from Stenotrophomonas maltophilia (strain R551-3).